The chain runs to 436 residues: Indole-3-acetyl-aspartic acid hydrolase (436 aa).

It belongs to the peptidase M20 family. Monomer.

It catalyses the reaction (indol-3-yl)acetyl-L-aspartate + H2O = (indol-3-yl)acetate + L-aspartate. Its function is as follows. Hydrolyzes indole-3-acetyl-aspartate (IAA-Asp) to indole-3-acetic acid (IAA). Shows an exclusively high substrate specificity for IAA-Asp. This chain is Indole-3-acetyl-aspartic acid hydrolase, found in Enterobacter agglomerans (Erwinia herbicola).